The primary structure comprises 330 residues: Beta-ketoacyl-[acyl-carrier-protein] synthase III (330 aa).

Active-site residues include Cys116 and His257. The segment at 258-262 (QANQR) is ACP-binding. Residue Asn287 is part of the active site.

It belongs to the thiolase-like superfamily. FabH family. In terms of assembly, homodimer.

It is found in the cytoplasm. It catalyses the reaction malonyl-[ACP] + acetyl-CoA + H(+) = 3-oxobutanoyl-[ACP] + CO2 + CoA. It participates in lipid metabolism; fatty acid biosynthesis. Its function is as follows. Catalyzes the condensation reaction of fatty acid synthesis by the addition to an acyl acceptor of two carbons from malonyl-ACP. Catalyzes the first condensation reaction which initiates fatty acid synthesis and may therefore play a role in governing the total rate of fatty acid production. Possesses both acetoacetyl-ACP synthase and acetyl transacylase activities. Its substrate specificity determines the biosynthesis of branched-chain and/or straight-chain of fatty acids. The chain is Beta-ketoacyl-[acyl-carrier-protein] synthase III from Synechocystis sp. (strain ATCC 27184 / PCC 6803 / Kazusa).